Consider the following 75-residue polypeptide: Protein Tlp homolog (75 aa).

The disordered stretch occupies residues 53 to 75; it reads REALDGMREEIKDEARDKKNGYM.

It belongs to the Tlp family.

This is Protein Tlp homolog from Clostridium botulinum (strain ATCC 19397 / Type A).